Here is a 306-residue protein sequence, read N- to C-terminus: Phosphoadenosine phosphosulfate reductase (306 aa).

2 disordered regions span residues 1–30 (MPAK…VSGG) and 245–266 (YHST…KGQA).

The protein belongs to the PAPS reductase family. CysH subfamily.

The enzyme catalyses [thioredoxin]-disulfide + sulfite + adenosine 3',5'-bisphosphate + 2 H(+) = [thioredoxin]-dithiol + 3'-phosphoadenylyl sulfate. Its pathway is sulfur metabolism; hydrogen sulfide biosynthesis; sulfite from sulfate: step 3/3. Its function is as follows. The NADP dependent reduction of PAPS into sulfite involves thioredoxin which probably plays the role of a thiol carrier. The polypeptide is Phosphoadenosine phosphosulfate reductase (sA) (Emericella nidulans (strain FGSC A4 / ATCC 38163 / CBS 112.46 / NRRL 194 / M139) (Aspergillus nidulans)).